We begin with the raw amino-acid sequence, 355 residues long: Putative L-lysine 2,3-aminomutase (355 aa).

In terms of domain architecture, Radical SAM core spans 93-308 (VHQYANRVLM…KERLSGLSLP (216 aa)). Cysteine 108, cysteine 112, and cysteine 115 together coordinate [4Fe-4S] cluster. N6-(pyridoxal phosphate)lysine is present on lysine 320.

It belongs to the radical SAM superfamily. KamA family. [4Fe-4S] cluster serves as cofactor. The cofactor is pyridoxal 5'-phosphate.

The polypeptide is Putative L-lysine 2,3-aminomutase (Treponema pallidum (strain Nichols)).